The primary structure comprises 135 residues: Crossover junction endodeoxyribonuclease Hje (135 aa).

Mg(2+) contacts are provided by Glu-10, Asp-39, and Glu-52.

This sequence belongs to the Holliday junction resolvase Hjc family. Hje subfamily. Homodimer. Mg(2+) is required as a cofactor.

The enzyme catalyses Endonucleolytic cleavage at a junction such as a reciprocal single-stranded crossover between two homologous DNA duplexes (Holliday junction).. A structure-specific endonuclease that resolves Holliday junction (HJ) intermediates during genetic recombination. Acts only on 4-way DNA junctions in a sequence non-specific manner; introduces paired nicks in opposing strands 2 bases 3' of the point of strand exchange only on continuous strands of 4-way junction DNA. Cleaves both mobile and immobile junctions. Plays a more direct role in DNA repair than Hjc. Overexpression of this protein decreases the growth rate, and leads to genomic instability, and global transcriptomic changes. The sequence is that of Crossover junction endodeoxyribonuclease Hje from Saccharolobus islandicus (strain REY15A) (Sulfolobus islandicus).